The chain runs to 384 residues: 2-isopropylmalate synthase 2 (384 aa).

The Pyruvate carboxyltransferase domain occupies Val9–Arg260. Residues Asp18, His198, His200, and Asn234 each contribute to the Mn(2+) site.

Belongs to the alpha-IPM synthase/homocitrate synthase family. LeuA type 1 subfamily. Homodimer. Requires Mn(2+) as cofactor.

The protein localises to the cytoplasm. It carries out the reaction 3-methyl-2-oxobutanoate + acetyl-CoA + H2O = (2S)-2-isopropylmalate + CoA + H(+). The protein operates within amino-acid biosynthesis; L-leucine biosynthesis; L-leucine from 3-methyl-2-oxobutanoate: step 1/4. Its function is as follows. Catalyzes the condensation of the acetyl group of acetyl-CoA with 3-methyl-2-oxobutanoate (2-ketoisovalerate) to form 3-carboxy-3-hydroxy-4-methylpentanoate (2-isopropylmalate). The sequence is that of 2-isopropylmalate synthase 2 from Caldanaerobacter subterraneus subsp. tengcongensis (strain DSM 15242 / JCM 11007 / NBRC 100824 / MB4) (Thermoanaerobacter tengcongensis).